The following is a 123-amino-acid chain: Small ribosomal subunit protein uS12 (123 aa).

The segment at Met-1–Arg-31 is disordered. The span at Lys-10–Ala-21 shows a compositional bias: basic and acidic residues. Asp-89 carries the post-translational modification 3-methylthioaspartic acid.

This sequence belongs to the universal ribosomal protein uS12 family. As to quaternary structure, part of the 30S ribosomal subunit. Contacts proteins S8 and S17. May interact with IF1 in the 30S initiation complex.

Functionally, with S4 and S5 plays an important role in translational accuracy. In terms of biological role, interacts with and stabilizes bases of the 16S rRNA that are involved in tRNA selection in the A site and with the mRNA backbone. Located at the interface of the 30S and 50S subunits, it traverses the body of the 30S subunit contacting proteins on the other side and probably holding the rRNA structure together. The combined cluster of proteins S8, S12 and S17 appears to hold together the shoulder and platform of the 30S subunit. This chain is Small ribosomal subunit protein uS12, found in Xanthobacter autotrophicus (strain ATCC BAA-1158 / Py2).